A 426-amino-acid polypeptide reads, in one-letter code: Pistil-specific extensin-like protein (426 aa).

The first 23 residues, M1–S23, serve as a signal peptide directing secretion. Disordered regions lie at residues G56–L109 and N121–P254. Composition is skewed to pro residues over residues V60–P94, P123–P161, P168–P224, and L231–P254. 3 repeat units span residues S69–P73, S76–P80, and S83–P87. The 4 X 5 AA repeats of S-P(4) stretch occupies residues S69–P182. Copy 4 of the repeat occupies S178–P182. A glycan (N-linked (GlcNAc...) asparagine) is linked at N310.

In terms of tissue distribution, pistil (stigma and style tissue).

The polypeptide is Pistil-specific extensin-like protein (Nicotiana tabacum (Common tobacco)).